The sequence spans 93 residues: Bombyxin-related peptide B (93 aa).

Residues 1–21 (MKFVLVLVSLALLVSLASVQG) form the signal peptide. Disulfide bonds link C25-C80, C37-C93, and C79-C84. The propeptide at 47–71 (SGAMGAAAMYGTRGWRWAAMGGNRG) is c peptide like.

The protein belongs to the insulin family. Heterodimer of a B chain and an A chain linked by two disulfide bonds. Located in 4 pairs of medial neurosecretory cells in the brain.

The protein resides in the secreted. This Agrius convolvuli (Convolvulus hawk-moth) protein is Bombyxin-related peptide B.